The sequence spans 158 residues: 6,7-dimethyl-8-ribityllumazine synthase (158 aa).

Residues Phe24, 58–60 (AFE), and 82–84 (AVI) contribute to the 5-amino-6-(D-ribitylamino)uracil site. 87 to 88 (GT) contributes to the (2S)-2-hydroxy-3-oxobutyl phosphate binding site. His90 serves as the catalytic Proton donor. Phe115 contributes to the 5-amino-6-(D-ribitylamino)uracil binding site. Arg129 contacts (2S)-2-hydroxy-3-oxobutyl phosphate.

The protein belongs to the DMRL synthase family. As to quaternary structure, forms an icosahedral capsid composed of 60 subunits, arranged as a dodecamer of pentamers.

It carries out the reaction (2S)-2-hydroxy-3-oxobutyl phosphate + 5-amino-6-(D-ribitylamino)uracil = 6,7-dimethyl-8-(1-D-ribityl)lumazine + phosphate + 2 H2O + H(+). Its pathway is cofactor biosynthesis; riboflavin biosynthesis; riboflavin from 2-hydroxy-3-oxobutyl phosphate and 5-amino-6-(D-ribitylamino)uracil: step 1/2. In terms of biological role, catalyzes the formation of 6,7-dimethyl-8-ribityllumazine by condensation of 5-amino-6-(D-ribitylamino)uracil with 3,4-dihydroxy-2-butanone 4-phosphate. This is the penultimate step in the biosynthesis of riboflavin. The protein is 6,7-dimethyl-8-ribityllumazine synthase of Azotobacter vinelandii (strain DJ / ATCC BAA-1303).